Here is a 203-residue protein sequence, read N- to C-terminus: ATP-dependent Clp protease proteolytic subunit 2 (203 aa).

The active-site Nucleophile is serine 98. Histidine 123 is a catalytic residue.

This sequence belongs to the peptidase S14 family. In terms of assembly, fourteen ClpP subunits assemble into 2 heptameric rings which stack back to back to give a disk-like structure with a central cavity, resembling the structure of eukaryotic proteasomes.

It is found in the cytoplasm. It catalyses the reaction Hydrolysis of proteins to small peptides in the presence of ATP and magnesium. alpha-casein is the usual test substrate. In the absence of ATP, only oligopeptides shorter than five residues are hydrolyzed (such as succinyl-Leu-Tyr-|-NHMec, and Leu-Tyr-Leu-|-Tyr-Trp, in which cleavage of the -Tyr-|-Leu- and -Tyr-|-Trp bonds also occurs).. In terms of biological role, cleaves peptides in various proteins in a process that requires ATP hydrolysis. Has a chymotrypsin-like activity. Plays a major role in the degradation of misfolded proteins. This Chlamydia trachomatis serovar A (strain ATCC VR-571B / DSM 19440 / HAR-13) protein is ATP-dependent Clp protease proteolytic subunit 2.